The following is a 439-amino-acid chain: Xylose isomerase (439 aa).

Residues histidine 101 and aspartate 104 contribute to the active site. Residues glutamate 232, glutamate 268, histidine 271, aspartate 296, aspartate 307, aspartate 309, and aspartate 339 each coordinate Mg(2+).

This sequence belongs to the xylose isomerase family. Homotetramer. Requires Mg(2+) as cofactor.

The protein localises to the cytoplasm. It catalyses the reaction alpha-D-xylose = alpha-D-xylulofuranose. This chain is Xylose isomerase, found in Yersinia enterocolitica serotype O:8 / biotype 1B (strain NCTC 13174 / 8081).